A 345-amino-acid chain; its full sequence is High mobility group protein 20A (345 aa).

2 disordered regions span residues 1 to 124 and 167 to 198; these read MENT…TERP and QYQN…VRGV. 2 stretches are compositionally biased toward polar residues: residues 32–48 and 57–67; these read LSGS…PTLQ and LQQSGEQQLGN. Basic residues predominate over residues 80–94; it reads TRRGGWTKGRKRKRS. The HMG box DNA-binding region spans 101–169; that stretch reads PKAPLTGYVR…RYTKELQQYQ (69 aa). Residues 112-124 show a composition bias toward basic and acidic residues; it reads MNERREQLRTERP. A compositionally biased stretch (polar residues) spans 167-180; the sequence is QYQNTDAYQTYSRK. Residues 227–290 are a coiled coil; the sequence is SKAREAELRQ…QHLQSVRQAL (64 aa).

The protein localises to the nucleus. Its function is as follows. Plays a role in neuronal differentiation. The polypeptide is High mobility group protein 20A (hmg20a) (Xenopus tropicalis (Western clawed frog)).